Reading from the N-terminus, the 646-residue chain is RNA-binding protein RMD9, mitochondrial (646 aa).

The N-terminal 14 residues, 1–14 (MMLRRNAVRSLKTM), are a transit peptide targeting the mitochondrion. The propeptide at 15–51 (EISVSNVVNSGSIAMLRGKLANVVLSDRTYHSSPIFH) is removed in mature form. One copy of the PPR1 repeat lies at 209-238 (VSGYGATHLLTSFKELSFDDDCIRIWEASK). A PPR2 repeat occupies 251–282 (EPKVVGFMLPLLYAKTRSLTEPNELYNQIIQS). One copy of the PPR3 repeat lies at 288–317 (PNLYSGLIKVFIKAEDYEKALSLFGQLCEK). One copy of the PPR4 repeat lies at 323 to 353 (YGYLIETHLSFIGDSKNLTLAESFFDKIIND). The stretch at 363–394 (VSTVNSFLQNIWKAQNDFDHVYRIWEKAVKFY) is one PPR5 repeat. One copy of the PPR6 repeat lies at 401 to 439 (GILSSLNNTFFTIFFENYINDNINGFRKLQEIITFYSGV). A PPR7 repeat occupies 444–473 (EPFFNVMLTRASIWHERSIIDFIDKNYTLY). The PPR8 repeat unit spans residues 481–514 (SYRILLKSLGSIDNTNNEEILDRWLELVKKLNEL).

Belongs to the RMD9 family. Monomer. Post-translationally, phosphorylated. Phosphorylation promotes binding to RNA.

The protein resides in the mitochondrion inner membrane. Its function is as follows. Binds the RNA motif 5'-AAUAA[U/C]AUUCUU-3' in the 3'-UTR of mitochondrial mRNAs. Involved in the processing or stability of mitochondrial mRNAs. The sequence is that of RNA-binding protein RMD9, mitochondrial from Saccharomyces cerevisiae (strain ATCC 204508 / S288c) (Baker's yeast).